The primary structure comprises 73 residues: uncharacterized protein (73 aa).

Positions 1–21 are cleaved as a signal peptide; it reads MTLFSSLSSLSTGSLKSSVSS. A compositionally biased stretch (low complexity) spans 1 to 38; the sequence is MTLFSSLSSLSTGSLKSSVSSIETGSSSGSFGSNETSG. The segment at 1-43 is disordered; the sequence is MTLFSSLSSLSTGSLKSSVSSIETGSSSGSFGSNETSGWGSHH. The N-linked (GlcNAc...) asparagine glycan is linked to N34.

The protein resides in the secreted. This is an uncharacterized protein from Dictyostelium discoideum (Social amoeba).